The following is a 149-amino-acid chain: Calmodulin (149 aa).

The residue at position 2 (A2) is an N-acetylalanine. EF-hand domains follow at residues 8–43 (EQIAEFKEAFSLFDKDGDGTITTKELGTVMRSLGQN), 44–79 (PTEAELQDMINEVDADGNGTIDFPEFLSLMARKMKD), 81–116 (DTEEELVEAFKVFDRDGNGLISAAELRHVMTNLGEK), and 117–149 (LTDEEVDEMIREADVDGDGHINYEEFVRMMMAK). Ca(2+) is bound by residues D21, D23, D25, T27, E32, D57, D59, N61, T63, E68, D94, D96, N98, and E105. K116 is modified (N6,N6,N6-trimethyllysine). Residues D130, D132, D134, H136, and E141 each contribute to the Ca(2+) site.

It belongs to the calmodulin family.

In terms of biological role, calmodulin mediates the control of a large number of enzymes, ion channels and other proteins by Ca(2+). Among the enzymes to be stimulated by the calmodulin-Ca(2+) complex are a number of protein kinases and phosphatases. This Stylonychia lemnae (Ciliate) protein is Calmodulin.